Reading from the N-terminus, the 734-residue chain is Photosystem I P700 chlorophyll a apoprotein A2 (734 aa).

Helical transmembrane passes span 46 to 69 (IFASHFGQLAIIFLWTSGNLFHVA), 135 to 158 (LYTGALFLLFISAISLIAGWLHLQ), 175 to 199 (LNHHLSGLFGVSSLAWTGHLVHVAI), 273 to 291 (MAHHHLAIAFIFLIAGHMY), 330 to 353 (IHFQLGLALASLGVITSLVAQHMY), 369 to 395 (AALYTHHQYIAGFIMTGAFAHGAIFFI), 417 to 439 (AIISHLSWASLFLGFHTLGLYVH), and 517 to 535 (FLVHHAIALGLHTTTLILV). [4Fe-4S] cluster-binding residues include Cys-559 and Cys-568. The next 2 helical transmembrane spans lie at 575–596 (AFYLAVFWMLNTIGWVTFYWHW) and 643–665 (LSVWAWMFLFGHLVWATGFMFLI). 3 residues coordinate chlorophyll a: His-654, Met-662, and Tyr-670. Residue Trp-671 participates in phylloquinone binding. A helical membrane pass occupies residues 707–727 (LVGLAHFSVGYIFTYAAFLIA).

The protein belongs to the PsaA/PsaB family. As to quaternary structure, the PsaA/B heterodimer binds the P700 chlorophyll special pair and subsequent electron acceptors. PSI consists of a core antenna complex that captures photons, and an electron transfer chain that converts photonic excitation into a charge separation. The eukaryotic PSI reaction center is composed of at least 11 subunits. The cofactor is P700 is a chlorophyll a/chlorophyll a' dimer, A0 is one or more chlorophyll a, A1 is one or both phylloquinones and FX is a shared 4Fe-4S iron-sulfur center..

The protein localises to the plastid. It is found in the chloroplast thylakoid membrane. It carries out the reaction reduced [plastocyanin] + hnu + oxidized [2Fe-2S]-[ferredoxin] = oxidized [plastocyanin] + reduced [2Fe-2S]-[ferredoxin]. Its function is as follows. PsaA and PsaB bind P700, the primary electron donor of photosystem I (PSI), as well as the electron acceptors A0, A1 and FX. PSI is a plastocyanin-ferredoxin oxidoreductase, converting photonic excitation into a charge separation, which transfers an electron from the donor P700 chlorophyll pair to the spectroscopically characterized acceptors A0, A1, FX, FA and FB in turn. Oxidized P700 is reduced on the lumenal side of the thylakoid membrane by plastocyanin. This Helianthus annuus (Common sunflower) protein is Photosystem I P700 chlorophyll a apoprotein A2.